The sequence spans 790 residues: cAMP and cAMP-inhibited cGMP 3',5'-cyclic phosphodiesterase 10A (790 aa).

3',5'-cyclic AMP contacts are provided by residues 290-291 (RC), 334-335 (IA), Thr-368, Gln-387, and His-519. A PDEase domain is found at 446-763 (TSEEWQGLMR…NQWEKVIRGE (318 aa)). His-519 serves as the catalytic Proton donor. Position 519 (His-519) interacts with 3',5'-cyclic GMP. Residues His-523, His-557, Asp-558, and Asp-668 each contribute to the a divalent metal cation site. 3',5'-cyclic AMP is bound at residue Gln-720. A 3',5'-cyclic GMP-binding site is contributed by Gln-720. Residues 768–790 (WISGPGPAPSKSTPEKLNVKVED) are disordered. Positions 780–790 (TPEKLNVKVED) are enriched in basic and acidic residues.

It belongs to the cyclic nucleotide phosphodiesterase family. As to quaternary structure, homodimer. A divalent metal cation is required as a cofactor. As to expression, detected in striatum (at protein level). Detected in testis and brain.

It localises to the cytoplasm. The protein resides in the cytosol. The enzyme catalyses a nucleoside 3',5'-cyclic phosphate + H2O = a nucleoside 5'-phosphate + H(+). It catalyses the reaction 3',5'-cyclic AMP + H2O = AMP + H(+). The catalysed reaction is 3',5'-cyclic GMP + H2O = GMP + H(+). The protein operates within purine metabolism; 3',5'-cyclic AMP degradation; AMP from 3',5'-cyclic AMP: step 1/1. It functions in the pathway purine metabolism; 3',5'-cyclic GMP degradation; GMP from 3',5'-cyclic GMP: step 1/1. Plays a role in signal transduction by regulating the intracellular concentration of cyclic nucleotides. Can hydrolyze both cAMP and cGMP, but has higher affinity for cAMP and is more efficient with cAMP as substrate. May play a critical role in regulating cAMP and cGMP levels in the striatum, a region of the brain that contributes to the control of movement and cognition. The sequence is that of cAMP and cAMP-inhibited cGMP 3',5'-cyclic phosphodiesterase 10A (Pde10a) from Mus musculus (Mouse).